Consider the following 72-residue polypeptide: Translation initiation factor IF-1 (72 aa).

Residues 1–72 (MAKEEAITVD…SKGRITYRKK (72 aa)) form the S1-like domain.

The protein belongs to the IF-1 family. As to quaternary structure, component of the 30S ribosomal translation pre-initiation complex which assembles on the 30S ribosome in the order IF-2 and IF-3, IF-1 and N-formylmethionyl-tRNA(fMet); mRNA recruitment can occur at any time during PIC assembly.

The protein localises to the cytoplasm. One of the essential components for the initiation of protein synthesis. Stabilizes the binding of IF-2 and IF-3 on the 30S subunit to which N-formylmethionyl-tRNA(fMet) subsequently binds. Helps modulate mRNA selection, yielding the 30S pre-initiation complex (PIC). Upon addition of the 50S ribosomal subunit IF-1, IF-2 and IF-3 are released leaving the mature 70S translation initiation complex. The protein is Translation initiation factor IF-1 of Leptospira borgpetersenii serovar Hardjo-bovis (strain L550).